Reading from the N-terminus, the 215-residue chain is MOB kinase activator-like 1A (215 aa).

Residues 1 to 29 (MSLFGLGSRNQKTFRPKKSAPTGSKGAQL) are disordered. Zn(2+) is bound by residues cysteine 80, cysteine 85, histidine 162, and histidine 167.

This sequence belongs to the MOB1/phocein family. Isoform 1 is constitutively expressed. Isoform 2 is specifically expressed in flowers bud during sporogenesis and gametogenesis.

Its subcellular location is the cytoplasm. The protein resides in the cytoskeleton. It localises to the phragmoplast. The polypeptide is MOB kinase activator-like 1A (Medicago sativa subsp. falcata (Sickle medic)).